Here is a 309-residue protein sequence, read N- to C-terminus: MGLRLSFMGTPHFSVPILHALLDAGHDIVAVYSQPPRPAGRRGLKMIPSPVQNAAQAKSIPVFTPQTLKTAEKQAQFAELAVDVAIVVAYGLFLPKAILETPRLGCFNAHASLLPRWRGAAPIQRAIMAGDKETGMMIMKMDEGLDTGSIALSRSIPITDNTTADELSNKLSHIGAELMIEMLSTLEKGQLKLTPQSGENITYASKIKKEETRIDWTKPAEFIHRQIRALSPFPGCWCNMNIAGREERVKILGSRLTKGPSREIGWIEPNSLIIHCGQGRIEITSLQKSGGKILDSAAFLRGARLSTVF.

112 to 115 (SLLP) is a binding site for (6S)-5,6,7,8-tetrahydrofolate.

This sequence belongs to the Fmt family.

It carries out the reaction L-methionyl-tRNA(fMet) + (6R)-10-formyltetrahydrofolate = N-formyl-L-methionyl-tRNA(fMet) + (6S)-5,6,7,8-tetrahydrofolate + H(+). In terms of biological role, attaches a formyl group to the free amino group of methionyl-tRNA(fMet). The formyl group appears to play a dual role in the initiator identity of N-formylmethionyl-tRNA by promoting its recognition by IF2 and preventing the misappropriation of this tRNA by the elongation apparatus. In Bartonella quintana (strain Toulouse) (Rochalimaea quintana), this protein is Methionyl-tRNA formyltransferase.